The sequence spans 791 residues: RAS guanyl-releasing protein 1 (791 aa).

An N-terminal Ras-GEF domain is found at 49–172 (LGKLSKGASL…RLIDTAQINS (124 aa)). The interval 53–106 (SKGASLDDLIQMCIQAFDLDGNMGQNSELLQIMLTMHGFLLPSTELLMKLRTLY) is ras exchanger motif region; required for transforming activity. In terms of domain architecture, Ras-GEF spans 201–432 (EPQELAEHLT…YELSYAREPR (232 aa)). EF-hand domains lie at 466-501 (HVQR…FPFS) and 502-528 (FCVM…ASSI). Asp479, Asp481, Asp483, Tyr485, Glu490, Asp506, Asp508, Glu510, and Glu517 together coordinate Ca(2+). The Phorbol-ester/DAG-type zinc-finger motif lies at 537-587 (LHNFQETTYLRPTFCDNCAGFLWGVIKQGYRCKDCGMNCHKQCKELVVFEC). Positions 683-695 (QVPSPQRSRTPGL) are enriched in polar residues. The interval 683 to 715 (QVPSPQRSRTPGLTSHLPISPMPSPCPSPVPTR) is disordered. Residues 702-712 (SPMPSPCPSPV) are compositionally biased toward pro residues. A coiled-coil region spans residues 728 to 785 (IRKARAELRGGKAGIQELEKEKALLKEENTTLKIQLKDAQRRVETLRAELRKYVLDSD).

This sequence belongs to the RASGRP family.

The protein localises to the cytoplasm. Its subcellular location is the cytosol. It localises to the cell membrane. It is found in the golgi apparatus membrane. The protein resides in the endoplasmic reticulum membrane. Regulated by F-actin polymerization and probably by calcium. Functionally, functions as a diacylglycerol (DAG)-regulated nucleotide exchange factor specifically activating Ras through the exchange of bound GDP for GTP. This Xenopus tropicalis (Western clawed frog) protein is RAS guanyl-releasing protein 1 (rasgrp1).